A 97-amino-acid polypeptide reads, in one-letter code: HssA/B-like protein 48 (97 aa).

Disordered regions lie at residues 1-20 and 78-97; these read MTLFASISSISNPSTSSKSS and GSGYPGNGGMGGGNGSCCGI.

This sequence belongs to the hssA/B family.

The polypeptide is HssA/B-like protein 48 (hssl48) (Dictyostelium discoideum (Social amoeba)).